The following is a 167-amino-acid chain: ATP synthase subunit b (167 aa).

A helical membrane pass occupies residues serine 7–alanine 25.

It belongs to the ATPase B chain family. In terms of assembly, F-type ATPases have 2 components, F(1) - the catalytic core - and F(0) - the membrane proton channel. F(1) has five subunits: alpha(3), beta(3), gamma(1), delta(1), epsilon(1). F(0) has three main subunits: a(1), b(2) and c(10-14). The alpha and beta chains form an alternating ring which encloses part of the gamma chain. F(1) is attached to F(0) by a central stalk formed by the gamma and epsilon chains, while a peripheral stalk is formed by the delta and b chains.

The protein localises to the cell inner membrane. In terms of biological role, f(1)F(0) ATP synthase produces ATP from ADP in the presence of a proton or sodium gradient. F-type ATPases consist of two structural domains, F(1) containing the extramembraneous catalytic core and F(0) containing the membrane proton channel, linked together by a central stalk and a peripheral stalk. During catalysis, ATP synthesis in the catalytic domain of F(1) is coupled via a rotary mechanism of the central stalk subunits to proton translocation. Its function is as follows. Component of the F(0) channel, it forms part of the peripheral stalk, linking F(1) to F(0). This is ATP synthase subunit b from Rickettsia prowazekii (strain Madrid E).